The chain runs to 295 residues: Movement protein BC1 (295 aa).

This sequence belongs to the begomovirus movement protein BC1 family. Binds to dimeric supercoiled plasmid DNA. Post-translationally, phosphorylated.

Its subcellular location is the host cell membrane. The protein resides in the host microsome membrane. It is found in the host endoplasmic reticulum membrane. Its function is as follows. Transports viral genome to neighboring plant cells directly through plasmosdesmata, without any budding. The movement protein allows efficient cell to cell propagation, by bypassing the host cell wall barrier. Begomovirus genome is shuttled out of nucleus by Nuclear shuttle protein (NSP) and the movement protein transports the DNA-NSP complex to cell plasmodesmata and facilitates further movement across the cell wall. The sequence is that of Movement protein BC1 from Brassica oleracea (Wild cabbage).